Here is a 216-residue protein sequence, read N- to C-terminus: Probable GTP-binding protein EngB (216 aa).

Residues 24-205 (ATPEIAFVGR…WARLAALAAE (182 aa)) enclose the EngB-type G domain. Residues 32–39 (GRSNVGKS), 59–63 (GRTRA), 86–89 (DLPG), 153–156 (TKTD), and 184–186 (FSA) contribute to the GTP site. Residues Ser39 and Thr61 each coordinate Mg(2+).

Belongs to the TRAFAC class TrmE-Era-EngA-EngB-Septin-like GTPase superfamily. EngB GTPase family. Mg(2+) serves as cofactor.

Functionally, necessary for normal cell division and for the maintenance of normal septation. This Anaeromyxobacter dehalogenans (strain 2CP-1 / ATCC BAA-258) protein is Probable GTP-binding protein EngB.